The sequence spans 464 residues: MKRFMDEDFLLNNKTAKVLYEKYAKDMPIVDFHCHLNPKEIYENKTFKNITEVWLGGDHYKWRLMRTNGIEEKYITGDADDYEKFLAWAKTIPMAIGNPIYHWTHLELKRYFGIDDVLNERSAPIIWEKTNKVLKELGARDIILKSNVEIICTTDDPIDTLEYHLKLKEDKDFNVKVYPTFRPDKGVNIERETFIPWVKKLAEVYGKKIESYDEFLDALKSRAEFFHSVGCRASDHAIDDMVFADASFDEVANIFKKALAGEKLTEIEFAKYKTYTLRFLGKVYSSLGWAMQLHINALRNNNTRMFNILGPDTGYDSINDGHIAFALVKFLDSLEKENSLPKTILYSLNPKDNYVLATIMGSFQGGGIPGKMQLGAAWWFNDSKDGNIQQMKDLANLGLLSRFVGMVTDSRSFLSYARHEYFRRLLCNLIGEWVENGEYPYDLETLGRIVQDICYYNAKEYFGF.

Belongs to the metallo-dependent hydrolases superfamily. Uronate isomerase family.

It carries out the reaction D-glucuronate = D-fructuronate. The enzyme catalyses aldehydo-D-galacturonate = keto-D-tagaturonate. Its pathway is carbohydrate metabolism; pentose and glucuronate interconversion. This is Uronate isomerase from Caldicellulosiruptor bescii (strain ATCC BAA-1888 / DSM 6725 / KCTC 15123 / Z-1320) (Anaerocellum thermophilum).